We begin with the raw amino-acid sequence, 764 residues long: Bifunctional type I diterpene synthase tndC (764 aa).

Positions 1–324 (MEYRYSTVVD…CPRYHPWSSY (324 aa)) are terpene cyclase. Residues Asp92 and Asp96 each coordinate Mg(2+). A DDXXD 1 motif is present at residues 92–96 (DDVTD). The NSE/DTE signature appears at 224-232 (NDLYSWQKE). A prenyltransferase region spans residues 325-761 (NERQLDWMKN…FQLRLILEML (437 aa)). Residues 377–403 (AVNGNGASHTSSIKGSTGGNGVTHSPV) are disordered. Residues 381 to 391 (NGASHTSSIKG) are compositionally biased toward polar residues. Positions 484, 487, and 516 each coordinate isopentenyl diphosphate. Residues Asp523 and Asp527 each coordinate Mg(2+). The DDXXD 2 motif lies at 523 to 527 (DDLED). Dimethylallyl diphosphate is bound at residue Arg532. Position 533 (Arg533) interacts with isopentenyl diphosphate. Dimethylallyl diphosphate-binding residues include Lys610, Thr611, Gln646, Asn653, Lys663, and Lys673.

It in the N-terminal section; belongs to the terpene synthase family. This sequence in the C-terminal section; belongs to the FPP/GGPP synthase family.

The catalysed reaction is isopentenyl diphosphate + (2E,6E)-farnesyl diphosphate = (2E,6E,10E)-geranylgeranyl diphosphate + diphosphate. It catalyses the reaction (2E,6E,10E)-geranylgeranyl diphosphate = talarodiene + diphosphate. It functions in the pathway secondary metabolite biosynthesis; terpenoid biosynthesis. Functionally, bifunctional type I diterpene synthase; part of the gene cluster that mediates the biosynthesis of talaronoid C, a fusicoccane diterpenoid with an unprecedented tricyclic 5/8/6 ring system. The first step in the pathway is performed by the fusicoccadiene synthase tndC that possesses both prenyl transferase and terpene cyclase activity, converting isopentenyl diphosphate and dimethylallyl diphosphate into geranylgeranyl diphosphate (GGDP) and further converting GGDP into talarodiene, a precursor for talaronoid C. The remaining enzymes from the cluster include the cytochrome P450 monooxygenase tndB, the aldehyde reductase tndE and the alcohol dehydrogenase tndF that are involved in the conversion of talarodiene into talaronoid C. This is Bifunctional type I diterpene synthase tndC from Aspergillus flavipes.